Consider the following 420-residue polypeptide: Serine hydroxymethyltransferase (420 aa).

Residues Leu-121 and 125-127 contribute to the (6S)-5,6,7,8-tetrahydrofolate site; that span reads GHL. An N6-(pyridoxal phosphate)lysine modification is found at Lys-230. (6S)-5,6,7,8-tetrahydrofolate-binding positions include Glu-246 and 354–356; that span reads SPF.

It belongs to the SHMT family. Homodimer. Requires pyridoxal 5'-phosphate as cofactor.

It is found in the cytoplasm. It carries out the reaction (6R)-5,10-methylene-5,6,7,8-tetrahydrofolate + glycine + H2O = (6S)-5,6,7,8-tetrahydrofolate + L-serine. It participates in one-carbon metabolism; tetrahydrofolate interconversion. It functions in the pathway amino-acid biosynthesis; glycine biosynthesis; glycine from L-serine: step 1/1. Functionally, catalyzes the reversible interconversion of serine and glycine with tetrahydrofolate (THF) serving as the one-carbon carrier. This reaction serves as the major source of one-carbon groups required for the biosynthesis of purines, thymidylate, methionine, and other important biomolecules. Also exhibits THF-independent aldolase activity toward beta-hydroxyamino acids, producing glycine and aldehydes, via a retro-aldol mechanism. This Rickettsia rickettsii (strain Iowa) protein is Serine hydroxymethyltransferase.